The primary structure comprises 257 residues: Pyridoxine 5'-phosphate synthase (257 aa).

Asn-6 serves as a coordination point for 3-amino-2-oxopropyl phosphate. Residue 8-9 (DH) coordinates 1-deoxy-D-xylulose 5-phosphate. Arg-17 provides a ligand contact to 3-amino-2-oxopropyl phosphate. Residue His-41 is the Proton acceptor of the active site. Positions 43 and 48 each coordinate 1-deoxy-D-xylulose 5-phosphate. Glu-68 acts as the Proton acceptor in catalysis. 1-deoxy-D-xylulose 5-phosphate is bound at residue Thr-98. Catalysis depends on His-210, which acts as the Proton donor. 3-amino-2-oxopropyl phosphate is bound by residues Gly-211 and 232-233 (GQ).

The protein belongs to the PNP synthase family. In terms of assembly, homooctamer; tetramer of dimers.

The protein resides in the cytoplasm. The catalysed reaction is 3-amino-2-oxopropyl phosphate + 1-deoxy-D-xylulose 5-phosphate = pyridoxine 5'-phosphate + phosphate + 2 H2O + H(+). It functions in the pathway cofactor biosynthesis; pyridoxine 5'-phosphate biosynthesis; pyridoxine 5'-phosphate from D-erythrose 4-phosphate: step 5/5. Catalyzes the complicated ring closure reaction between the two acyclic compounds 1-deoxy-D-xylulose-5-phosphate (DXP) and 3-amino-2-oxopropyl phosphate (1-amino-acetone-3-phosphate or AAP) to form pyridoxine 5'-phosphate (PNP) and inorganic phosphate. The sequence is that of Pyridoxine 5'-phosphate synthase from Campylobacter jejuni (strain RM1221).